Consider the following 156-residue polypeptide: Small ribosomal subunit protein uS7 (156 aa).

Belongs to the universal ribosomal protein uS7 family. Part of the 30S ribosomal subunit. Contacts proteins S9 and S11.

In terms of biological role, one of the primary rRNA binding proteins, it binds directly to 16S rRNA where it nucleates assembly of the head domain of the 30S subunit. Is located at the subunit interface close to the decoding center, probably blocks exit of the E-site tRNA. In Bacillus pumilus (strain SAFR-032), this protein is Small ribosomal subunit protein uS7.